The following is an 880-amino-acid chain: DNA-directed RNA polymerase subunit beta C-terminal section (880 aa).

It belongs to the RNA polymerase beta chain family. In plastids the minimal PEP RNA polymerase catalytic core is composed of four subunits: alpha, beta, beta', and beta''. When a (nuclear-encoded) sigma factor is associated with the core the holoenzyme is formed, which can initiate transcription.

It is found in the plastid. Its subcellular location is the chloroplast. It carries out the reaction RNA(n) + a ribonucleoside 5'-triphosphate = RNA(n+1) + diphosphate. In terms of biological role, DNA-dependent RNA polymerase catalyzes the transcription of DNA into RNA using the four ribonucleoside triphosphates as substrates. This is DNA-directed RNA polymerase subunit beta C-terminal section (rpoB2) from Pleurastrum terricola (Filamentous green alga).